We begin with the raw amino-acid sequence, 379 residues long: MSNISNDSGLDDSANSGAVVSANGPLAATRLSWFLAEVDDGLMKDGKPNGRRRLCVLHSMELLESDVSDKYMTRFVEFRVNGMVLEAKLILAADERRLVDAALLSMSKEEREDAGGQQLLVQYTENEKAGERLIQKLVSPNNVMLLSTKPELKGNPLVRLAPGCIAHILYAYESRDYMEKILLHLKARSFDLAFDDNLEAEPEAMNDDTWMLVQYSPEPEMVVYQVVQYRQTVWRKENLFKDVIAYMQLPGSDIVLQAVVISYGQDKEVQDAKYEELQRFSFDIDFPLPEELEKHPDHMTSTALFSRTSLYQKAEQRDTTGEHRELRKSLEQMSEKAQGEAQMIIDAFDMVDNINKNLQSRLSGEVRSVVEVTSGDELH.

In terms of assembly, the heterotrimeric Elba complex consists of Elba1, Elba2 and Elba3.

Its subcellular location is the nucleus. In terms of biological role, the heterotrimeric Elba complex is required for chromatin domain boundary function during early embryogenesis. It binds to a 8-bp sequence 5'-CCAATAAG-3' in the Fab-7 insulator or boundary element in the bithorax complex and contributes to its insulator or boundary activity. Elba3 lacks DNA-binding activity and plays the role of an adapter protein, bringing Elba1 and 2 together, thereby establishing a complex that recognizes the asymmetric sequence motif through the BEN domains of Elba1 and 2. The polypeptide is Early boundary activity protein 3 (Drosophila melanogaster (Fruit fly)).